The chain runs to 246 residues: Allergin-1 (246 aa).

An N-terminal signal peptide occupies residues 1–33; the sequence is MGDGDSPMCLSAVSFKGIRCWLDKLLLWALTIS. Topologically, residues 34 to 150 are extracellular; the sequence is ITLQNAAVDC…DESCPSCRLS (117 aa). Positions 52–131 constitute an Ig-like C2-type domain; that stretch reads PSPNLNSSMN…VNVSNLMKYS (80 aa). Residue Asn68 is glycosylated (N-linked (GlcNAc...) asparagine). An intrachain disulfide couples Cys73 to Cys120. Residues 151-171 form a helical membrane-spanning segment; that stretch reads LLLPGLLLGILVIVLVLAYLI. Residues 172 to 246 are Cytoplasmic-facing; sequence HLKYKKGKKT…ADYIYSELTH (75 aa). Short sequence motifs (ITIM motif) lie at residues 214-219 and 239-244; these read IHYATP and YIYSEL. Phosphotyrosine is present on residues Tyr216 and Tyr241.

In terms of assembly, monomer. Interacts (tyrosine-phosphorylated) with PTPN6, PTPN11 and INPP5D. In terms of processing, N-glycosylated. As to expression, expressed in myeloid cells (dendritic cells, macrophages and neutrophils but not in T-cells, B-cells or natural killer cells) and mast cells (at protein level).

The protein localises to the cell membrane. It localises to the secreted. Its function is as follows. Immunoglobulin-like receptor which plays an inhibitory role in degranulation of mast cells. Negatively regulates IgE-mediated mast cell activation and suppresses the type I immediate hypersensitivity reaction. This chain is Allergin-1 (Milr1), found in Mus musculus (Mouse).